The following is a 506-amino-acid chain: Maturase K (506 aa).

It belongs to the intron maturase 2 family. MatK subfamily.

It localises to the plastid. Its subcellular location is the chloroplast. Its function is as follows. Usually encoded in the trnK tRNA gene intron. Probably assists in splicing its own and other chloroplast group II introns. This Angiopteris evecta (Mule's foot fern) protein is Maturase K.